The chain runs to 432 residues: Trigger factor (432 aa).

The PPIase FKBP-type domain maps to 161–246; the sequence is GTRATINFVG…VVKVEARELP (86 aa).

It belongs to the FKBP-type PPIase family. Tig subfamily.

It localises to the cytoplasm. The enzyme catalyses [protein]-peptidylproline (omega=180) = [protein]-peptidylproline (omega=0). Functionally, involved in protein export. Acts as a chaperone by maintaining the newly synthesized protein in an open conformation. Functions as a peptidyl-prolyl cis-trans isomerase. This is Trigger factor from Aliivibrio fischeri (strain MJ11) (Vibrio fischeri).